A 712-amino-acid polypeptide reads, in one-letter code: Autophagy-related protein 13 (712 aa).

Disordered regions lie at residues 388–443 and 568–611; these read AGST…ETPP and GSVG…DDDE. A compositionally biased stretch (low complexity) spans 402 to 415; that stretch reads SSVGSGSKYSSSFG. The ATG17-binding stretch occupies residues 412–420; sequence SSFGRIRRH. Positions 424 to 439 are enriched in basic and acidic residues; sequence RRSESIDRTAKPRKSN. The segment at 441 to 500 is ATG1-binding; it reads TPPEDLLEFVKLLEDKKELNMKPSTILPQQDISSSLIKFQSMKPNNDTLSDNLSMSMSID. Residues 576–585 are compositionally biased toward acidic residues; it reads TNEDSKEDED.

Belongs to the ATG13 family. Fungi subfamily. As to quaternary structure, hypophosphorylated form interacts with ATG1 to form the ATG1-ATG13 kinase complex. The ATG1-ATG13 complex interacts with the ATG17-ATG29-ATG31 complex through direct interaction with ATG17. Interacts with VAC8. Post-translationally, hyperphosphorylated under nutrient-rich conditions. Starvation and TOR inactivation results in ATG13 partial dephosphorylation leading to ATG1-binding. Dephosphorylation induces ATG17-binding.

Its subcellular location is the cytoplasm. The protein localises to the preautophagosomal structure. Its function is as follows. Activates the ATG1 kinase in a nutritional condition dependent manner through the TOR pathway, leading to autophagy. Involved in ATG9 and ATG23 cycling through the pre-autophagosomal structure. Also involved in cytoplasm to vacuole transport (Cvt) and more specifically in Cvt vesicle formation. Seems to play a role in the switching machinery regulating the conversion between the Cvt pathway and autophagy. Finally, ATG13 is also required for glycogen storage during stationary phase. The sequence is that of Autophagy-related protein 13 from Kluyveromyces marxianus (strain DMKU3-1042 / BCC 29191 / NBRC 104275) (Yeast).